A 402-amino-acid polypeptide reads, in one-letter code: Phosphoglycerate kinase (402 aa).

Residues 24 to 26, arginine 40, 63 to 66, arginine 122, and arginine 155 contribute to the substrate site; these read DFN and HFGR. ATP contacts are provided by residues lysine 206, glycine 297, glutamate 328, and 357–360; that span reads GGDS.

It belongs to the phosphoglycerate kinase family. Monomer.

It is found in the cytoplasm. The catalysed reaction is (2R)-3-phosphoglycerate + ATP = (2R)-3-phospho-glyceroyl phosphate + ADP. It participates in carbohydrate degradation; glycolysis; pyruvate from D-glyceraldehyde 3-phosphate: step 2/5. The protein is Phosphoglycerate kinase of Prochlorococcus marinus (strain SARG / CCMP1375 / SS120).